Reading from the N-terminus, the 152-residue chain is Small ribosomal subunit protein uS8m (152 aa).

It belongs to the universal ribosomal protein uS8 family.

It localises to the mitochondrion. The protein is Small ribosomal subunit protein uS8m (mrps8) of Dictyostelium citrinum (Slime mold).